A 180-amino-acid polypeptide reads, in one-letter code: MKELIVNQEKRVSPELHYEISQFLYYEIALLDEWRFRDWLELLSEDLSYTMRTIVNAQTRDRRKSIQPPTTWLFNDNKFQLERRIARLETGMAWAEEPPSRTRHLLTNLVITETDLPDQFHVQSNYLLYRSQKERDEVFYVGKRLDCVRRNPKTDSWLICKREITLDQAVLTFHNLSVLF.

This sequence belongs to the bacterial ring-hydroxylating dioxygenase beta subunit family. In terms of assembly, this dioxygenase system consists of four proteins: the two subunits of the hydroxylase component (HcaE and HcaF), a ferredoxin (HcaC) and a ferredoxin reductase (HcaD).

It catalyses the reaction 3-phenylpropanoate + NADH + O2 + H(+) = 3-(cis-5,6-dihydroxycyclohexa-1,3-dien-1-yl)propanoate + NAD(+). The enzyme catalyses (E)-cinnamate + NADH + O2 + H(+) = (2E)-3-(cis-5,6-dihydroxycyclohexa-1,3-dien-1-yl)prop-2-enoate + NAD(+). It participates in aromatic compound metabolism; 3-phenylpropanoate degradation. Part of the multicomponent 3-phenylpropionate dioxygenase. Converts 3-phenylpropionic acid (PP) and cinnamic acid (CI) into 3-phenylpropionate-dihydrodiol (PP-dihydrodiol) and cinnamic acid-dihydrodiol (CI-dihydrodiol), respectively. The chain is 3-phenylpropionate/cinnamic acid dioxygenase subunit beta from Photorhabdus laumondii subsp. laumondii (strain DSM 15139 / CIP 105565 / TT01) (Photorhabdus luminescens subsp. laumondii).